Consider the following 306-residue polypeptide: Non-specific ribonucleoside hydrolase RihC (306 aa).

H235 is an active-site residue.

It belongs to the IUNH family. RihC subfamily.

Its function is as follows. Hydrolyzes both purine and pyrimidine ribonucleosides with a broad-substrate specificity. The chain is Non-specific ribonucleoside hydrolase RihC from Salmonella enteritidis PT4 (strain P125109).